A 298-amino-acid chain; its full sequence is Glycine--tRNA ligase alpha subunit (298 aa).

Belongs to the class-II aminoacyl-tRNA synthetase family. As to quaternary structure, tetramer of two alpha and two beta subunits.

It is found in the cytoplasm. It catalyses the reaction tRNA(Gly) + glycine + ATP = glycyl-tRNA(Gly) + AMP + diphosphate. In Helicobacter pylori (strain HPAG1), this protein is Glycine--tRNA ligase alpha subunit.